A 92-amino-acid polypeptide reads, in one-letter code: Small ribosomal subunit protein uS19 (92 aa).

The protein belongs to the universal ribosomal protein uS19 family.

Protein S19 forms a complex with S13 that binds strongly to the 16S ribosomal RNA. The chain is Small ribosomal subunit protein uS19 from Geobacillus sp. (strain WCH70).